A 238-amino-acid chain; its full sequence is 6-phosphogluconolactonase (238 aa).

Belongs to the glucosamine/galactosamine-6-phosphate isomerase family. 6-phosphogluconolactonase subfamily.

It catalyses the reaction 6-phospho-D-glucono-1,5-lactone + H2O = 6-phospho-D-gluconate + H(+). Its pathway is carbohydrate degradation; pentose phosphate pathway; D-ribulose 5-phosphate from D-glucose 6-phosphate (oxidative stage): step 2/3. Hydrolysis of 6-phosphogluconolactone to 6-phosphogluconate. The protein is 6-phosphogluconolactonase (pgl) of Mesorhizobium japonicum (strain LMG 29417 / CECT 9101 / MAFF 303099) (Mesorhizobium loti (strain MAFF 303099)).